The sequence spans 286 residues: Thymidylate synthase (286 aa).

140–141 (RR) is a binding site for dUMP. The active-site Nucleophile is the cysteine 161. DUMP-binding positions include 185–188 (RSND), asparagine 196, and 226–228 (HIY). Aspartate 188 is a binding site for (6R)-5,10-methylene-5,6,7,8-tetrahydrofolate. Alanine 285 serves as a coordination point for (6R)-5,10-methylene-5,6,7,8-tetrahydrofolate.

The protein belongs to the thymidylate synthase family. Bacterial-type ThyA subfamily. Homodimer.

It is found in the cytoplasm. It catalyses the reaction dUMP + (6R)-5,10-methylene-5,6,7,8-tetrahydrofolate = 7,8-dihydrofolate + dTMP. It functions in the pathway pyrimidine metabolism; dTTP biosynthesis. Functionally, catalyzes the reductive methylation of 2'-deoxyuridine-5'-monophosphate (dUMP) to 2'-deoxythymidine-5'-monophosphate (dTMP) while utilizing 5,10-methylenetetrahydrofolate (mTHF) as the methyl donor and reductant in the reaction, yielding dihydrofolate (DHF) as a by-product. This enzymatic reaction provides an intracellular de novo source of dTMP, an essential precursor for DNA biosynthesis. This is Thymidylate synthase from Streptococcus thermophilus (strain CNRZ 1066).